We begin with the raw amino-acid sequence, 231 residues long: Lactate utilization protein C (231 aa).

Belongs to the LutC/YkgG family.

Its function is as follows. Is involved in L-lactate degradation and allows cells to grow with lactate as the sole carbon source. This Macrococcus caseolyticus (strain JCSC5402) (Macrococcoides caseolyticum) protein is Lactate utilization protein C.